The chain runs to 77 residues: DNA-directed RNA polymerase subunit omega (77 aa).

Belongs to the RNA polymerase subunit omega family. As to quaternary structure, the RNAP catalytic core consists of 2 alpha, 1 beta, 1 beta' and 1 omega subunit. When a sigma factor is associated with the core the holoenzyme is formed, which can initiate transcription.

It catalyses the reaction RNA(n) + a ribonucleoside 5'-triphosphate = RNA(n+1) + diphosphate. Promotes RNA polymerase assembly. Latches the N- and C-terminal regions of the beta' subunit thereby facilitating its interaction with the beta and alpha subunits. The sequence is that of DNA-directed RNA polymerase subunit omega from Nitratidesulfovibrio vulgaris (strain ATCC 29579 / DSM 644 / CCUG 34227 / NCIMB 8303 / VKM B-1760 / Hildenborough) (Desulfovibrio vulgaris).